Reading from the N-terminus, the 450-residue chain is Bifunctional protein GlmU (450 aa).

The interval 1-236 (MTAHKPFSAV…AWEVSGVNNR (236 aa)) is pyrophosphorylase. UDP-N-acetyl-alpha-D-glucosamine is bound by residues 12–15 (LAAG), Lys-26, Gln-79, 84–85 (GT), 107–109 (YGD), Gly-147, Glu-162, Asn-177, and Asn-234. Mg(2+) is bound at residue Asp-109. Asn-234 is a Mg(2+) binding site. The segment at 237-257 (AELASLESLWQNRKRQDVMKD) is linker. Residues 258 to 450 (GASLIAPETV…KKFRQRKKKK (193 aa)) form an N-acetyltransferase region. Residues Arg-323 and Lys-341 each contribute to the UDP-N-acetyl-alpha-D-glucosamine site. Residue His-353 is the Proton acceptor of the active site. Tyr-356 and Asn-367 together coordinate UDP-N-acetyl-alpha-D-glucosamine. Acetyl-CoA-binding positions include 376–377 (NY), Ser-395, Ala-413, and Arg-430.

In the N-terminal section; belongs to the N-acetylglucosamine-1-phosphate uridyltransferase family. The protein in the C-terminal section; belongs to the transferase hexapeptide repeat family. Homotrimer. It depends on Mg(2+) as a cofactor.

It is found in the cytoplasm. It catalyses the reaction alpha-D-glucosamine 1-phosphate + acetyl-CoA = N-acetyl-alpha-D-glucosamine 1-phosphate + CoA + H(+). The catalysed reaction is N-acetyl-alpha-D-glucosamine 1-phosphate + UTP + H(+) = UDP-N-acetyl-alpha-D-glucosamine + diphosphate. Its pathway is nucleotide-sugar biosynthesis; UDP-N-acetyl-alpha-D-glucosamine biosynthesis; N-acetyl-alpha-D-glucosamine 1-phosphate from alpha-D-glucosamine 6-phosphate (route II): step 2/2. It functions in the pathway nucleotide-sugar biosynthesis; UDP-N-acetyl-alpha-D-glucosamine biosynthesis; UDP-N-acetyl-alpha-D-glucosamine from N-acetyl-alpha-D-glucosamine 1-phosphate: step 1/1. The protein operates within bacterial outer membrane biogenesis; LPS lipid A biosynthesis. Its function is as follows. Catalyzes the last two sequential reactions in the de novo biosynthetic pathway for UDP-N-acetylglucosamine (UDP-GlcNAc). The C-terminal domain catalyzes the transfer of acetyl group from acetyl coenzyme A to glucosamine-1-phosphate (GlcN-1-P) to produce N-acetylglucosamine-1-phosphate (GlcNAc-1-P), which is converted into UDP-GlcNAc by the transfer of uridine 5-monophosphate (from uridine 5-triphosphate), a reaction catalyzed by the N-terminal domain. This is Bifunctional protein GlmU from Zymomonas mobilis subsp. mobilis (strain ATCC 31821 / ZM4 / CP4).